The primary structure comprises 656 residues: uncharacterized protein (656 aa).

Residues 623 to 656 (EIDIPGTPASIDPEWSRPPGSITDDHVFDAPLHR) are disordered. Basic and acidic residues predominate over residues 645–656 (TDDHVFDAPLHR).

This is an uncharacterized protein from Mycobacterium tuberculosis (strain ATCC 25618 / H37Rv).